The chain runs to 1239 residues: Anion exchange protein 2 (1239 aa).

The disordered stretch occupies residues 1 to 237 (MSSAPRRPAK…HRSYNLQERR (237 aa)). The Cytoplasmic portion of the chain corresponds to 1–706 (MSSAPRRPAK…DFRDALDPQC (706 aa)). 2 stretches are compositionally biased toward basic and acidic residues: residues 37–49 (ELHR…RFEE) and 58–75 (GGEE…EYHR). 2 stretches are compositionally biased toward basic residues: residues 76–85 (QSSHHIHHPL) and 94–110 (RRRK…RRRP). A phosphoserine mark is found at serine 113, serine 132, serine 144, serine 170, and serine 172. The span at 120–133 (TIEEGEEDEDEASE) shows a compositional bias: acidic residues. A compositionally biased stretch (low complexity) spans 141 to 155 (TQPSPVSTPSSVQFF). Positions 189–207 (GAQAGTQVEEAEAVAVASG) are enriched in low complexity. Residues 208 to 217 (TAGGDDGGAS) show a composition bias toward gly residues. Serine 241 carries the post-translational modification Phosphoserine. At threonine 255 the chain carries Phosphothreonine. Lysine 272 is subject to N6-methyllysine. Residues 285 to 318 (HLVRKNAKGSTQSGREGREPGPTPRARPRAPHKP) form a disordered region. Serine 441 carries the post-translational modification Phosphoserine. Residues 447–468 (SLLGHHHGQGAESDPHVTEPLI) form a disordered region. Membrane (anion exchange) stretches follow at residues 706 to 1239 (CLAA…PMPV) and 708 to 1239 (AAVI…PMPV). The next 4 helical transmembrane spans lie at 707 to 727 (LAAV…FGGL), 752 to 772 (FCLL…LLVF), 794 to 814 (IGFW…SFLV), and 824 to 844 (IFAF…LVKI). Topologically, residues 845-895 (FQEHPLHGCSASNSSEVDGGENMTWAVARPTLGPGNRSLAGQSGQGKPRGQ) are extracellular. Residues asparagine 857, asparagine 866, and asparagine 880 are each glycosylated (N-linked (GlcNAc...) asparagine). A helical transmembrane segment spans residues 896–916 (PNTALLSLVLMAGTFFIAFFL). At 917–931 (RKFKNSRFFPGRIRR) the chain is on the cytoplasmic side. 5 helical membrane-spanning segments follow: residues 932–952 (VIGD…DYSI), 987–1007 (FPVW…ILIF), 1034–1054 (LLLI…WLAA), 1088–1108 (RVTG…GDLL), and 1111–1131 (IPLA…LNGI). Cysteine 1171 carries S-palmitoyl cysteine lipidation. A helical transmembrane segment spans residues 1172–1192 (LALLWAVMSTAASLAFPFILI).

The protein belongs to the anion exchanger (TC 2.A.31) family.

It is found in the apical cell membrane. The protein localises to the basolateral cell membrane. The enzyme catalyses hydrogencarbonate(in) + chloride(out) = hydrogencarbonate(out) + chloride(in). Its function is as follows. Sodium-independent anion exchanger which mediates the electroneutral exchange of chloride for bicarbonate ions across the cell membrane. Plays an important role in osteoclast differentiation and function. Regulates bone resorption and calpain-dependent actin cytoskeleton organization in osteoclasts via anion exchange-dependent control of pH. Essential for intracellular pH regulation in CD8(+) T-cells upon CD3 stimulation, modulating CD8(+) T-cell response. The sequence is that of Anion exchange protein 2 (SLC4A2) from Pongo abelii (Sumatran orangutan).